We begin with the raw amino-acid sequence, 628 residues long: (+)-alpha pinene synthase 1, chloroplastic (628 aa).

Mg(2+)-binding residues include D379, D383, and D531. Residues D379–D383 carry the DDXXD motif motif.

Belongs to the terpene synthase family. Tpsd subfamily. Mg(2+) is required as a cofactor. It depends on Mn(2+) as a cofactor.

It is found in the plastid. The protein localises to the chloroplast. It catalyses the reaction (2E)-geranyl diphosphate = (1R,5R)-alpha-pinene + diphosphate. The protein operates within terpene metabolism; oleoresin biosynthesis. It functions in the pathway secondary metabolite biosynthesis; terpenoid biosynthesis. Monoterpene synthase (TPS) involved in the biosynthesis of monoterpene natural products included in conifer oleoresin secretions and volatile emissions; these compounds contribute to biotic and abiotic stress defense against herbivores and pathogens. Catalyzes the conversion of (2E)-geranyl diphosphate (GPP) to (+)-alpha-pinene. The protein is (+)-alpha pinene synthase 1, chloroplastic of Pinus contorta (Shore pine).